The chain runs to 313 residues: Protoheme IX farnesyltransferase (313 aa).

9 helical membrane-spanning segments follow: residues 29–49 (VISL…RGWP), 57–77 (LWLL…AGVF), 101–123 (LISS…VMLW), 124–144 (VWGT…YVVI), 157–177 (IVIG…AVTG), 185–205 (YLFA…ALMI), 225–245 (MTVA…LMPV), 247–267 (FGAV…WLLW), and 287–307 (AVPL…AGAI).

It belongs to the UbiA prenyltransferase family. Protoheme IX farnesyltransferase subfamily.

It localises to the cell membrane. The enzyme catalyses heme b + (2E,6E)-farnesyl diphosphate + H2O = Fe(II)-heme o + diphosphate. The protein operates within porphyrin-containing compound metabolism; heme O biosynthesis; heme O from protoheme: step 1/1. Converts heme B (protoheme IX) to heme O by substitution of the vinyl group on carbon 2 of heme B porphyrin ring with a hydroxyethyl farnesyl side group. The sequence is that of Protoheme IX farnesyltransferase from Deinococcus radiodurans (strain ATCC 13939 / DSM 20539 / JCM 16871 / CCUG 27074 / LMG 4051 / NBRC 15346 / NCIMB 9279 / VKM B-1422 / R1).